A 169-amino-acid polypeptide reads, in one-letter code: Signal peptidase complex subunit 1 (169 aa).

The Cytoplasmic segment spans residues 1 to 93 (MARGGDTGCT…QKLAEQMFQG (93 aa)). Positions 91–169 (FQGIILFSAI…RKIKRHAKNN (79 aa)) are (Microbial infection) Interaction with JEV NS2B. Residues 94–114 (IILFSAIVGFIYGYVAEQFGW) form a helical membrane-spanning segment. The tract at residues 110-169 (EQFGWTVYIVMAGFAFSCLLTLPPWPIYRRHPLKWLPVQESSTDDKKPGERKIKRHAKNN) is (Microbial infection) Interaction with HCV NS2 and HCV E2. Threonine 115 is a topological domain (lumenal). A helical transmembrane segment spans residues 116–136 (VYIVMAGFAFSCLLTLPPWPI). Topologically, residues 137–169 (YRRHPLKWLPVQESSTDDKKPGERKIKRHAKNN) are cytoplasmic. The tract at residues 148–169 (QESSTDDKKPGERKIKRHAKNN) is disordered.

Belongs to the SPCS1 family. Component of the signal peptidase complex paralog A (SPC-A) composed of a catalytic subunit SEC11A and three accessory subunits SPCS1, SPCS2 and SPCS3. Component of the signal peptidase complex paralog C (SPC-C) composed of a catalytic subunit SEC11C and three accessory subunits SPCS1, SPCS2 and SPCS3. Within the complex, interacts with SPCS2 and SPCS3. The complex induces a local thinning of the ER membrane which is used to measure the length of the signal peptide (SP) h-region of protein substrates. This ensures the selectivity of the complex towards h-regions shorter than 18-20 amino acids. In terms of assembly, (Microbial infection) Interacts with hepatitis C virus (HCV) proteins NS2 and E2. Interacts with NS2B from Japanese encephalitis virus (JEV), West Nile virus (WNV), and Zika virus (ZIKV). May be phosphorylated.

It localises to the endoplasmic reticulum membrane. In terms of biological role, component of the signal peptidase complex (SPC) which catalyzes the cleavage of N-terminal signal sequences from nascent proteins as they are translocated into the lumen of the endoplasmic reticulum. Dispensable for SPC enzymatic activity. Its function is as follows. (Microbial infection) Required for the post-translational processing of proteins involved in virion assembly and secretion from flaviviruses such as West Nile virus (WNV), Japanese encephalitis virus (JEV), Dengue virus type 2 (DENV-2), Yellow Fever virus (YFV), Zika virus (ZIKV) and hepatitis C virus (HCV). Plays a key role in the post-translational processing of flaviviral structural proteins prM, E, and NS1. In HCV, it is involved in virion assembly where it promotes the interaction between HCV virus proteins NS2 and E2. This Homo sapiens (Human) protein is Signal peptidase complex subunit 1 (SPCS1).